The chain runs to 211 residues: MDNDKYLKGTTTVGVVCTDGIVLASEQRATMGNFIASKTAKKVYQIDDLVAMTTAGSVGDAQQLVRLVNVESQLYKMRRNESMTIKGIATLMSNFLNSNRYYPMMVQLLIGGVDKNGPGIYSLDALGGSIEETRISATGSGSPMAYGVLEDQYREDMTVKEGLDLAIRAIHNATKRDSASGENIDVVVITKEAFRRLDPEEVKSIRASLPK.

A propeptide spans 1 to 9 (MDNDKYLKG) (removed in mature form; by autocatalysis). The active-site Nucleophile is Thr-10.

Belongs to the peptidase T1B family. As to quaternary structure, the 20S proteasome core is composed of 14 alpha and 14 beta subunits that assemble into four stacked heptameric rings, resulting in a barrel-shaped structure. The two inner rings, each composed of seven catalytic beta subunits, are sandwiched by two outer rings, each composed of seven alpha subunits. The catalytic chamber with the active sites is on the inside of the barrel. Has a gated structure, the ends of the cylinder being occluded by the N-termini of the alpha-subunits. Is capped at one or both ends by the proteasome regulatory ATPase, PAN.

The protein localises to the cytoplasm. The catalysed reaction is Cleavage of peptide bonds with very broad specificity.. With respect to regulation, the formation of the proteasomal ATPase PAN-20S proteasome complex, via the docking of the C-termini of PAN into the intersubunit pockets in the alpha-rings, triggers opening of the gate for substrate entry. Interconversion between the open-gate and close-gate conformations leads to a dynamic regulation of the 20S proteasome proteolysis activity. Its function is as follows. Component of the proteasome core, a large protease complex with broad specificity involved in protein degradation. The polypeptide is Proteasome subunit beta (Methanosarcina barkeri (strain Fusaro / DSM 804)).